The sequence spans 320 residues: N-acetylneuraminate lyase (320 aa).

Residues T51 and T52 each contribute to the aceneuramate site. Residue Y143 is the Proton donor of the active site. K173 acts as the Schiff-base intermediate with substrate in catalysis. Aceneuramate contacts are provided by T175, G199, D201, E202, and S218. A Phosphoserine modification is found at S308.

This sequence belongs to the DapA family. NanA subfamily. As to quaternary structure, homotetramer.

It is found in the cytoplasm. The catalysed reaction is aceneuramate = aldehydo-N-acetyl-D-mannosamine + pyruvate. It functions in the pathway amino-sugar metabolism; N-acetylneuraminate degradation. Catalyzes the cleavage of N-acetylneuraminic acid (sialic acid) to form pyruvate and N-acetylmannosamine via a Schiff base intermediate. It prevents sialic acids from being recycled and returning to the cell surface. Involved in the N-glycolylneuraminic acid (Neu5Gc) degradation pathway. This is N-acetylneuraminate lyase from Mus musculus (Mouse).